We begin with the raw amino-acid sequence, 323 residues long: Dof zinc finger protein DOF3.6 (323 aa).

The segment at 76-130 (LNCPRCDSTNTKFCYFNNYSLTQPRHFCKTCRRYWTRGGSLRNVPVGGGFRRNKR) adopts a Dof-type zinc-finger fold. The Zn(2+) site is built by Cys-78, Cys-81, Cys-103, and Cys-106. 2 disordered regions span residues 121 to 160 (VGGGFRRNKRSKSRSKSTVVVSTDNTTSTSSLTSRPSYSN) and 304 to 323 (GGNSSWTGFTSNNSTGHLSF). Residues 126-135 (RRNKRSKSRS) are compositionally biased toward basic residues. Residues 136 to 159 (KSTVVVSTDNTTSTSSLTSRPSYS) show a composition bias toward low complexity.

In terms of assembly, interacts with OBF4. In terms of tissue distribution, predominantly expressed in roots.

The protein resides in the nucleus. Transcription factor that binds specifically to a 5'-AA[AG]G-3' consensus core sequence. Enhances the DNA binding of OBF transcription factors to OCS elements. This Arabidopsis thaliana (Mouse-ear cress) protein is Dof zinc finger protein DOF3.6 (DOF3.6).